The following is a 486-amino-acid chain: tRNA sulfurtransferase (486 aa).

Positions 61-165 (AILIDVLGRI…NDHMMLIKAR (105 aa)) constitute a THUMP domain. ATP-binding positions include 183 to 184 (LI), Lys-265, Gly-287, and Gln-296. A disulfide bridge links Cys-344 with Cys-456. Positions 404 to 481 (LSANDVILDI…NGFANVRVFA (78 aa)) constitute a Rhodanese domain. Cys-456 acts as the Cysteine persulfide intermediate in catalysis.

Belongs to the ThiI family.

It localises to the cytoplasm. It catalyses the reaction [ThiI sulfur-carrier protein]-S-sulfanyl-L-cysteine + a uridine in tRNA + 2 reduced [2Fe-2S]-[ferredoxin] + ATP + H(+) = [ThiI sulfur-carrier protein]-L-cysteine + a 4-thiouridine in tRNA + 2 oxidized [2Fe-2S]-[ferredoxin] + AMP + diphosphate. It carries out the reaction [ThiS sulfur-carrier protein]-C-terminal Gly-Gly-AMP + S-sulfanyl-L-cysteinyl-[cysteine desulfurase] + AH2 = [ThiS sulfur-carrier protein]-C-terminal-Gly-aminoethanethioate + L-cysteinyl-[cysteine desulfurase] + A + AMP + 2 H(+). It functions in the pathway cofactor biosynthesis; thiamine diphosphate biosynthesis. In terms of biological role, catalyzes the ATP-dependent transfer of a sulfur to tRNA to produce 4-thiouridine in position 8 of tRNAs, which functions as a near-UV photosensor. Also catalyzes the transfer of sulfur to the sulfur carrier protein ThiS, forming ThiS-thiocarboxylate. This is a step in the synthesis of thiazole, in the thiamine biosynthesis pathway. The sulfur is donated as persulfide by IscS. The sequence is that of tRNA sulfurtransferase from Mannheimia succiniciproducens (strain KCTC 0769BP / MBEL55E).